The following is a 418-amino-acid chain: Glucose-1-phosphate adenylyltransferase (418 aa).

Alpha-D-glucose 1-phosphate is bound by residues Tyr-107, Gly-172, 187–188 (EK), and Ser-205.

It belongs to the bacterial/plant glucose-1-phosphate adenylyltransferase family. As to quaternary structure, homotetramer.

It catalyses the reaction alpha-D-glucose 1-phosphate + ATP + H(+) = ADP-alpha-D-glucose + diphosphate. It functions in the pathway glycan biosynthesis; glycogen biosynthesis. Involved in the biosynthesis of ADP-glucose, a building block required for the elongation reactions to produce glycogen. Catalyzes the reaction between ATP and alpha-D-glucose 1-phosphate (G1P) to produce pyrophosphate and ADP-Glc. This is Glucose-1-phosphate adenylyltransferase from Gemmatimonas aurantiaca (strain DSM 14586 / JCM 11422 / NBRC 100505 / T-27).